We begin with the raw amino-acid sequence, 341 residues long: Gibberellin 2-beta-dioxygenase 2 (341 aa).

Positions 179–283 (KSDSCLRLNH…RISMIYFGGP (105 aa)) constitute a Fe2OG dioxygenase domain. Fe cation-binding residues include H207, D209, and H264. The active site involves R274. R274 lines the 2-oxoglutarate pocket.

This sequence belongs to the iron/ascorbate-dependent oxidoreductase family. GA2OX subfamily. Fe(2+) serves as cofactor. As to expression, preferentially expressed in flowers, siliques, and upper stems. Expressed in cotyledons, at the base of the shoot apical meristem and developing leaf primordia.

The catalysed reaction is gibberellin A1 + 2-oxoglutarate + O2 = gibberellin A8 + succinate + CO2. It functions in the pathway plant hormone biosynthesis; gibberellin biosynthesis. Its function is as follows. Catalyzes the 2-beta-hydroxylation of several biologically active gibberellins, leading to the homeostatic regulation of their endogenous level. Catabolism of gibberellins (GAs) plays a central role in plant development. Converts GA9/GA20 to GA51/GA29 and GA4/GA1 to GA34/GA8. The chain is Gibberellin 2-beta-dioxygenase 2 (GA2OX2) from Arabidopsis thaliana (Mouse-ear cress).